Reading from the N-terminus, the 419-residue chain is Serine/threonine-protein kinase Kist (419 aa).

Residues 23–304 enclose the Protein kinase domain; that stretch reads WQVQSRLGSG…AEMALCSPFF (282 aa). ATP contacts are provided by residues 29-37 and Lys54; that span reads LGSGSSASV. Catalysis depends on proton acceptor residues Asp141 and Asp158. Residues 324–406 form the RRM domain; it reads RLLNVLDDDY…KFVVATFYPL (83 aa).

The protein belongs to the protein kinase superfamily. Ser/Thr protein kinase family. Interacts with stathmin and CDKN1B/p27Kip1 Interacts with PAM. In the embryo, preferentially expressed in the developing nervous system.

It is found in the cytoplasm. It localises to the nucleus. It carries out the reaction L-seryl-[protein] + ATP = O-phospho-L-seryl-[protein] + ADP + H(+). The catalysed reaction is L-threonyl-[protein] + ATP = O-phospho-L-threonyl-[protein] + ADP + H(+). In terms of biological role, upon serum stimulation, phosphorylates CDKN1B/p27Kip1, thus controlling CDKN1B subcellular location and cell cycle progression in G1 phase. May be involved in trafficking and/or processing of RNA. The protein is Serine/threonine-protein kinase Kist (Uhmk1) of Rattus norvegicus (Rat).